The following is a 269-amino-acid chain: Energy-coupling factor transporter ATP-binding protein EcfA1 (269 aa).

The ABC transporter domain maps to 8–242; that stretch reads IVFKNVSFQY…AEELTRIGLD (235 aa). Residue 42–49 coordinates ATP; the sequence is GHNGSGKS.

This sequence belongs to the ABC transporter superfamily. Energy-coupling factor EcfA family. As to quaternary structure, forms a stable energy-coupling factor (ECF) transporter complex composed of 2 membrane-embedded substrate-binding proteins (S component), 2 ATP-binding proteins (A component) and 2 transmembrane proteins (T component).

It is found in the cell membrane. Its function is as follows. ATP-binding (A) component of a common energy-coupling factor (ECF) ABC-transporter complex. Unlike classic ABC transporters this ECF transporter provides the energy necessary to transport a number of different substrates. This chain is Energy-coupling factor transporter ATP-binding protein EcfA1, found in Staphylococcus aureus (strain Mu50 / ATCC 700699).